Here is a 357-residue protein sequence, read N- to C-terminus: O-methyltransferase pgmB (357 aa).

Asp206 contributes to the S-adenosyl-L-methionine binding site. Catalysis depends on His256, which acts as the Proton acceptor.

The protein belongs to the class I-like SAM-binding methyltransferase superfamily. Cation-independent O-methyltransferase family.

The protein operates within pigment biosynthesis. It participates in secondary metabolite biosynthesis. Its function is as follows. O-methyltransferase; part of the gene cluster that mediates the biosynthesis of pleosporalin A, ascomycone A, as well as a third cryptic naphthoquinone derived pigment, all responsible for the coloration of conidia. Specifically methylates position C-6 of the pgmA product 3-acetonyl-1,6,8-trihydroxy-2-naphthaldehyde to yield fusarubinaldehyde. The pathway begins with the biosynthesis of the cyclized heptaketide 3-acetonyl-1,6,8-trihydroxy-2-naphthaldehyde by the NR-PKS pgmA. The C-6 hydroxyl group is further methylated by the O-methyltransferase pgmB to yield fusarubinaldehyde which is in turn oxidized by the cytochrome P450 monooxygenase pgmC at C-9. The C-1 hydroxyl group is then methylated spontaneously. Although pgmE, pgmD and pgmH are essential for the production of pleosporalin A, it is not the case for the 2 other final products and it remains difficult to assign a specific function to each enzyme. PgmF and pgmG seem not to be involved in pigment biosynthesis although they were regulated by the cluster-specific transcription factor pgmR. The protein is O-methyltransferase pgmB of Aspergillus terreus (strain NIH 2624 / FGSC A1156).